The sequence spans 209 residues: Ribosomal RNA large subunit methyltransferase E (209 aa).

S-adenosyl-L-methionine-binding residues include glycine 63, tryptophan 65, aspartate 83, aspartate 99, and aspartate 124. The active-site Proton acceptor is lysine 164.

The protein belongs to the class I-like SAM-binding methyltransferase superfamily. RNA methyltransferase RlmE family.

It localises to the cytoplasm. It carries out the reaction uridine(2552) in 23S rRNA + S-adenosyl-L-methionine = 2'-O-methyluridine(2552) in 23S rRNA + S-adenosyl-L-homocysteine + H(+). In terms of biological role, specifically methylates the uridine in position 2552 of 23S rRNA at the 2'-O position of the ribose in the fully assembled 50S ribosomal subunit. This chain is Ribosomal RNA large subunit methyltransferase E, found in Yersinia pseudotuberculosis serotype O:1b (strain IP 31758).